The primary structure comprises 701 residues: Elongation factor G (701 aa).

Residues 11–287 (NKVRNIGIMA…AVVDYLPSPL (277 aa)) form the tr-type G domain. GTP-binding positions include 20 to 27 (AHIDAGKT), 84 to 88 (DTPGH), and 138 to 141 (NKMD).

The protein belongs to the TRAFAC class translation factor GTPase superfamily. Classic translation factor GTPase family. EF-G/EF-2 subfamily.

The protein resides in the cytoplasm. Its function is as follows. Catalyzes the GTP-dependent ribosomal translocation step during translation elongation. During this step, the ribosome changes from the pre-translocational (PRE) to the post-translocational (POST) state as the newly formed A-site-bound peptidyl-tRNA and P-site-bound deacylated tRNA move to the P and E sites, respectively. Catalyzes the coordinated movement of the two tRNA molecules, the mRNA and conformational changes in the ribosome. In Mycobacterium sp. (strain JLS), this protein is Elongation factor G.